Reading from the N-terminus, the 304-residue chain is Virulence protein VirA (304 aa).

Could be involved in the biosynthesis of a major surface antigen important for virulence. The polypeptide is Virulence protein VirA (virA) (Vibrio anguillarum (strain ATCC 68554 / 775) (Listonella anguillarum)).